The chain runs to 216 residues: Cytosolic-abundant heat soluble protein 2 (216 aa).

Residues Met1 to Asp11 show a composition bias toward polar residues. 2 disordered regions span residues Met1–Thr34 and Arg66–Glu91. Basic and acidic residues predominate over residues Ala12–Gln22. 2 stretches are compositionally biased toward polar residues: residues Thr25–Thr34 and Ser68–Gln77. Residues Glu81–Gln180 adopt a coiled-coil conformation. CAHS motif regions lie at residues Tyr115–Gln133 and Gln152–Glu170.

The protein belongs to the Cytosolic-abundant heat soluble protein (CAHS) family.

Its subcellular location is the cytoplasm. Its function is as follows. CAHS proteins are cytosolic heat soluble proteins that seem to contribute to the anhydrobiosis in tardigrades, but their specific mechanisms are yet to be identified. It is possible that protection during anhydrobiosis might occur via the stabilization of vitrifying small molecules such as sugars, but not via the direct glass transition of CAHS proteins themselves. This Ramazzottius varieornatus (Water bear) protein is Cytosolic-abundant heat soluble protein 2.